Reading from the N-terminus, the 497-residue chain is Serine/arginine-rich protein PSR (497 aa).

The signal sequence occupies residues Met-1–Ala-19. Residues Ala-20 to Gly-366 are Extracellular-facing. Residues Asn-92, Asn-193, Asn-202, Asn-261, and Asn-283 are each glycosylated (N-linked (GlcNAc...) asparagine). Residues Leu-367–Ile-387 form a helical membrane-spanning segment. Topologically, residues Tyr-388–Asp-497 are cytoplasmic. The tract at residues Met-424–Gly-450 is necessary for phosphorylation by PSRPK in vitro. The segment covering Arg-436–Asp-447 has biased composition (acidic residues). The interval Arg-436–Asp-497 is disordered. Positions Gly-459–Ser-471 are enriched in basic residues. Positions Gly-476–Asp-497 are enriched in basic and acidic residues.

Phosphorylated on serine residues in the RS domain by PSRPK.

The protein resides in the membrane. In Physarum polycephalum (Slime mold), this protein is Serine/arginine-rich protein PSR.